Consider the following 342-residue polypeptide: Serpentine receptor class gamma-69 (342 aa).

Transmembrane regions (helical) follow at residues 11 to 31 (MAGL…SVVV), 51 to 71 (SLLY…HFLI), 106 to 126 (PIAI…IVAA), 140 to 160 (LFVL…IPCK), 191 to 211 (IAAV…LIAL), 222 to 242 (AEIS…IYAF), and 269 to 289 (FAID…STTV).

Belongs to the nematode receptor-like protein srg family.

It is found in the membrane. The sequence is that of Serpentine receptor class gamma-69 (srg-69) from Caenorhabditis elegans.